The primary structure comprises 893 residues: Zinc finger protein 281 (893 aa).

Disordered stretches follow at residues 1 to 113 (MKIG…FPSQ), 126 to 148 (IKQEKPADPEEQPSHHHHHHHHY), 153 to 172 (AGAEERSPGLGGGEGGSHGV), and 198 to 251 (SGSR…GAVL). Lys-2 participates in a covalent cross-link: Glycyl lysine isopeptide (Lys-Gly) (interchain with G-Cter in SUMO2). Residues 7-36 (FLSGGGGPSSSGGSGSGGSSGSASGGSGGG) are compositionally biased toward gly residues. Residues Lys-100 and Lys-127 each participate in a glycyl lysine isopeptide (Lys-Gly) (interchain with G-Cter in SUMO2) cross-link. Over residues 127–139 (KQEKPADPEEQPS) the composition is skewed to basic and acidic residues. The segment covering 161 to 170 (GLGGGEGGSH) has biased composition (gly residues). The segment covering 201–216 (RTDEHGNQEPKQDANV) has biased composition (basic and acidic residues). Residues Lys-211, Lys-217, Lys-223, Lys-230, Lys-240, and Lys-256 each participate in a glycyl lysine isopeptide (Lys-Gly) (interchain with G-Cter in SUMO2) cross-link. 3 C2H2-type zinc fingers span residues 258–280 (HICDHCSAAFRSSYHLRRHVLIH), 286–308 (FQCSQCSMGFIQKYLLQRHEKIH), and 314–336 (FGCDQCSMKFIQKYHMERHKRTH). Residues Lys-298 and Lys-322 each participate in a glycyl lysine isopeptide (Lys-Gly) (interchain with G-Cter in SUMO2) cross-link. Residues 342 to 364 (YKCDTCQQYFSRTDRLLKHRRTC) form a C2H2-type 4; atypical zinc finger. Lys-370 is covalently cross-linked (Glycyl lysine isopeptide (Lys-Gly) (interchain with G-Cter in SUMO2)). Residues 371–425 (GAASAEPGSSNHNSMGNLAVLSQGNTSSSRRKSKSKSIAIENKEHKTGKTNESQM) form a disordered region. Polar residues predominate over residues 377–396 (PGSSNHNSMGNLAVLSQGNT). Position 392 is a phosphoserine (Ser-392). Residues Lys-406, Lys-413, Lys-457, and Lys-474 each participate in a glycyl lysine isopeptide (Lys-Gly) (interchain with G-Cter in SUMO2) cross-link. The residue at position 481 (Ser-481) is a Phosphoserine. Glycyl lysine isopeptide (Lys-Gly) (interchain with G-Cter in SUMO2) cross-links involve residues Lys-490, Lys-495, Lys-536, Lys-596, Lys-614, and Lys-619. Positions 613–658 (GKSETQKEDPFNLTEPRVDLHTSGEHSELVQEENLSPGTQTPSNDK) are disordered. The span at 616-641 (ETQKEDPFNLTEPRVDLHTSGEHSEL) shows a compositional bias: basic and acidic residues. The span at 645–658 (ENLSPGTQTPSNDK) shows a compositional bias: polar residues. The residue at position 648 (Ser-648) is a Phosphoserine. Residues Lys-658 and Lys-667 each participate in a glycyl lysine isopeptide (Lys-Gly) (interchain with G-Cter in SUMO2) cross-link. Over residues 775-813 (SSAFQSSSQKLTSQKEQQKNLESSTSFQIPSQELASQID) the composition is skewed to polar residues. The disordered stretch occupies residues 775-815 (SSAFQSSSQKLTSQKEQQKNLESSTSFQIPSQELASQIDPQ). Ser-782 is subject to Phosphoserine. Glycyl lysine isopeptide (Lys-Gly) (interchain with G-Cter in SUMO2) cross-links involve residues Lys-784, Lys-789, and Lys-793. Ser-805 carries the phosphoserine modification. Glycyl lysine isopeptide (Lys-Gly) (interchain with G-Cter in SUMO2) cross-links involve residues Lys-816 and Lys-838. The residue at position 886 (Thr-886) is a Phosphothreonine.

The protein belongs to the krueppel C2H2-type zinc-finger protein family. As to quaternary structure, interacts with NANOG. Associates with the NuRD complex.

The protein localises to the nucleus. Its function is as follows. Transcription repressor that plays a role in regulation of embryonic stem cells (ESCs) differentiation. Required for ESCs differentiation and acts by mediating autorepression of NANOG in ESCs: binds to the NANOG promoter and promotes association of NANOG protein to its own promoter and recruits the NuRD complex, which deacetylates histones. Not required for establishement and maintenance of ESCs. Represses the transcription of a number of genes including GAST, ODC1 and VIM. Binds to the G-rich box in the enhancer region of these genes. The sequence is that of Zinc finger protein 281 (Znf281) from Mus musculus (Mouse).